Consider the following 467-residue polypeptide: Asparagine--tRNA ligase (467 aa).

It belongs to the class-II aminoacyl-tRNA synthetase family. In terms of assembly, homodimer.

It is found in the cytoplasm. It catalyses the reaction tRNA(Asn) + L-asparagine + ATP = L-asparaginyl-tRNA(Asn) + AMP + diphosphate + H(+). This is Asparagine--tRNA ligase from Actinobacillus succinogenes (strain ATCC 55618 / DSM 22257 / CCUG 43843 / 130Z).